We begin with the raw amino-acid sequence, 614 residues long: Dihydroxy-acid dehydratase (614 aa).

Mg(2+) is bound at residue Asp-81. Cys-122 serves as a coordination point for [2Fe-2S] cluster. Residues Asp-123 and Lys-124 each contribute to the Mg(2+) site. N6-carboxylysine is present on Lys-124. Cys-195 is a binding site for [2Fe-2S] cluster. Glu-491 contacts Mg(2+). Residue Ser-517 is the Proton acceptor of the active site.

This sequence belongs to the IlvD/Edd family. Homodimer. It depends on [2Fe-2S] cluster as a cofactor. Mg(2+) serves as cofactor.

The catalysed reaction is (2R)-2,3-dihydroxy-3-methylbutanoate = 3-methyl-2-oxobutanoate + H2O. It catalyses the reaction (2R,3R)-2,3-dihydroxy-3-methylpentanoate = (S)-3-methyl-2-oxopentanoate + H2O. Its pathway is amino-acid biosynthesis; L-isoleucine biosynthesis; L-isoleucine from 2-oxobutanoate: step 3/4. It functions in the pathway amino-acid biosynthesis; L-valine biosynthesis; L-valine from pyruvate: step 3/4. Functions in the biosynthesis of branched-chain amino acids. Catalyzes the dehydration of (2R,3R)-2,3-dihydroxy-3-methylpentanoate (2,3-dihydroxy-3-methylvalerate) into 2-oxo-3-methylpentanoate (2-oxo-3-methylvalerate) and of (2R)-2,3-dihydroxy-3-methylbutanoate (2,3-dihydroxyisovalerate) into 2-oxo-3-methylbutanoate (2-oxoisovalerate), the penultimate precursor to L-isoleucine and L-valine, respectively. This is Dihydroxy-acid dehydratase from Nitrobacter winogradskyi (strain ATCC 25391 / DSM 10237 / CIP 104748 / NCIMB 11846 / Nb-255).